We begin with the raw amino-acid sequence, 132 residues long: Small ribosomal subunit protein uS8 (132 aa).

The protein belongs to the universal ribosomal protein uS8 family. In terms of assembly, part of the 30S ribosomal subunit. Contacts proteins S5 and S12.

One of the primary rRNA binding proteins, it binds directly to 16S rRNA central domain where it helps coordinate assembly of the platform of the 30S subunit. The protein is Small ribosomal subunit protein uS8 of Borreliella burgdorferi (strain ZS7) (Borrelia burgdorferi).